Here is an 865-residue protein sequence, read N- to C-terminus: SWI/SNF chromatin-remodeling complex subunit sol1 (865 aa).

Disordered regions lie at residues 1-34 (MNNQ…QPAY), 54-92 (MMNT…ASNG), 116-143 (QEKE…QSRE), and 163-183 (VRQT…ANQL). Polar residues predominate over residues 17 to 30 (SYPTQGQSYNTQEE). Residues 121–139 (AMQQQQQQQQQQQLYQRQM) are compositionally biased toward low complexity. Positions 188 to 278 (AASFDKFMVS…YLLPYEEAWL (91 aa)) constitute an ARID domain. The segment at 288 to 380 (QQAKANHSAN…QTSSSAAPVD (93 aa)) is disordered. The segment covering 328 to 353 (HSKSPSPAFTANRFSPAAPTTVSSER) has biased composition (polar residues). A compositionally biased stretch (pro residues) spans 356 to 368 (PPYPSAPTRPTPP). Serine 852 and serine 855 each carry phosphoserine.

The protein belongs to the SWI1 family. Component of the SWI/SNF global transcription activator complex composed of at least arp9, arp42, snf5, snf22, snf30, sbf59, sol1, ssr1, ssr2, ssr3, ssr4 and tfg3.

The protein localises to the nucleus. Functionally, component of the SWI/SNF complex, an ATP-dependent chromatin remodeling complex, required for the positive and negative regulation of gene expression of a large number of genes. It changes chromatin structure by altering DNA-histone contacts within a nucleosome, leading eventually to a change in nucleosome position, thus facilitating or repressing binding of gene-specific transcription factors. The chain is SWI/SNF chromatin-remodeling complex subunit sol1 (sol1) from Schizosaccharomyces pombe (strain 972 / ATCC 24843) (Fission yeast).